The following is a 537-amino-acid chain: Pentatricopeptide repeat-containing protein At1g02370, mitochondrial (537 aa).

The transit peptide at 1 to 18 directs the protein to the mitochondrion; it reads MNFRNLIASGSRLGKRFC. PPR repeat units lie at residues 171-205, 206-240, 241-275, 277-307, 312-346, 347-377, and 382-416; these read HQSTYGALMNCYCVELEEEKAKAHFEIMDELNFVN, NSLPFNNMMSMYMRLSQPEKVPVLVDAMKQRGISP, CGVTYSIWMQSCGSLNDLDGLEKIIDEMGKDSEAK, TWNTFSNLAAIYTKAGLYEKADSALKSMEEK, NRDSHHFLMSLYAGISKGPEVYRVWESLKKARPEV, NNLSYLVMLQAMSKLGDLDGIKKIFTEWESK, and DMRLANIAINTYLKGNMYEEAEKILDGAMKKSKGP.

This sequence belongs to the PPR family. P subfamily.

The protein resides in the mitochondrion. The chain is Pentatricopeptide repeat-containing protein At1g02370, mitochondrial from Arabidopsis thaliana (Mouse-ear cress).